A 415-amino-acid polypeptide reads, in one-letter code: tRNA (cytosine(38)-C(5))-methyltransferase (415 aa).

In terms of domain architecture, SAM-dependent MTase C5-type spans 4–396 (LRVLELYSGI…TVLCEGFGNA (393 aa)). S-adenosyl-L-methionine is bound by residues 13–15 (IGG), Asp34, 57–58 (IE), and Ser76. The active site involves Cys79. Ser376 contacts S-adenosyl-L-methionine.

Belongs to the class I-like SAM-binding methyltransferase superfamily. C5-methyltransferase family. In terms of tissue distribution, highly expressed in thymus, testis, and at much lower levels in spleen, lung, brain, heart, kidney, liver, skeletal muscle and embryonic stem cells.

It is found in the cytoplasm. It catalyses the reaction cytidine(38) in tRNA + S-adenosyl-L-methionine = 5-methylcytidine(38) in tRNA + S-adenosyl-L-homocysteine + H(+). Its function is as follows. Specifically methylates cytosine 38 in the anticodon loop of tRNA(Asp). Has higher activity on tRNA(Asp) modified with queuosine at position 34. The chain is tRNA (cytosine(38)-C(5))-methyltransferase (Trdmt1) from Mus musculus (Mouse).